The primary structure comprises 986 residues: Bifunctional glutamine synthetase adenylyltransferase/adenylyl-removing enzyme (986 aa).

An adenylyl removase region spans residues 1–473; it reads MTSSAPGNAD…HYARLFEGDP (473 aa). Residues 478-986 form an adenylyl transferase region; that stretch reads SLPPVNYGAG…RRVFTALLER (509 aa).

This sequence belongs to the GlnE family. Mg(2+) is required as a cofactor.

The catalysed reaction is [glutamine synthetase]-O(4)-(5'-adenylyl)-L-tyrosine + phosphate = [glutamine synthetase]-L-tyrosine + ADP. It catalyses the reaction [glutamine synthetase]-L-tyrosine + ATP = [glutamine synthetase]-O(4)-(5'-adenylyl)-L-tyrosine + diphosphate. Involved in the regulation of glutamine synthetase GlnA, a key enzyme in the process to assimilate ammonia. When cellular nitrogen levels are high, the C-terminal adenylyl transferase (AT) inactivates GlnA by covalent transfer of an adenylyl group from ATP to specific tyrosine residue of GlnA, thus reducing its activity. Conversely, when nitrogen levels are low, the N-terminal adenylyl removase (AR) activates GlnA by removing the adenylyl group by phosphorolysis, increasing its activity. The regulatory region of GlnE binds the signal transduction protein PII (GlnB) which indicates the nitrogen status of the cell. The polypeptide is Bifunctional glutamine synthetase adenylyltransferase/adenylyl-removing enzyme (Bradyrhizobium sp. (strain ORS 278)).